Here is a 332-residue protein sequence, read N- to C-terminus: Ketol-acid reductoisomerase (NADP(+)) (332 aa).

In terms of domain architecture, KARI N-terminal Rossmann spans 5-185; that stretch reads VKVYYDDEVS…GCTRAGVIET (181 aa). Residues 28–31, arginine 51, serine 56, and 86–89 each bind NADP(+); these read YGNQ and DLVQ. Histidine 111 is a catalytic residue. Glycine 137 is a binding site for NADP(+). The KARI C-terminal knotted domain maps to 186 to 331; sequence TFKDETESDL…RFIRKMSGLE (146 aa). Positions 194, 198, 230, and 234 each coordinate Mg(2+). Serine 255 is a binding site for substrate.

It belongs to the ketol-acid reductoisomerase family. The cofactor is Mg(2+).

The enzyme catalyses (2R)-2,3-dihydroxy-3-methylbutanoate + NADP(+) = (2S)-2-acetolactate + NADPH + H(+). It catalyses the reaction (2R,3R)-2,3-dihydroxy-3-methylpentanoate + NADP(+) = (S)-2-ethyl-2-hydroxy-3-oxobutanoate + NADPH + H(+). It participates in amino-acid biosynthesis; L-isoleucine biosynthesis; L-isoleucine from 2-oxobutanoate: step 2/4. It functions in the pathway amino-acid biosynthesis; L-valine biosynthesis; L-valine from pyruvate: step 2/4. In terms of biological role, involved in the biosynthesis of branched-chain amino acids (BCAA). Catalyzes an alkyl-migration followed by a ketol-acid reduction of (S)-2-acetolactate (S2AL) to yield (R)-2,3-dihydroxy-isovalerate. In the isomerase reaction, S2AL is rearranged via a Mg-dependent methyl migration to produce 3-hydroxy-3-methyl-2-ketobutyrate (HMKB). In the reductase reaction, this 2-ketoacid undergoes a metal-dependent reduction by NADPH to yield (R)-2,3-dihydroxy-isovalerate. The chain is Ketol-acid reductoisomerase (NADP(+)) from Pyrococcus abyssi (strain GE5 / Orsay).